The primary structure comprises 404 residues: Exodeoxyribonuclease 7 large subunit (404 aa).

Belongs to the XseA family. As to quaternary structure, heterooligomer composed of large and small subunits.

It localises to the cytoplasm. It carries out the reaction Exonucleolytic cleavage in either 5'- to 3'- or 3'- to 5'-direction to yield nucleoside 5'-phosphates.. Functionally, bidirectionally degrades single-stranded DNA into large acid-insoluble oligonucleotides, which are then degraded further into small acid-soluble oligonucleotides. The sequence is that of Exodeoxyribonuclease 7 large subunit from Ruminiclostridium cellulolyticum (strain ATCC 35319 / DSM 5812 / JCM 6584 / H10) (Clostridium cellulolyticum).